A 280-amino-acid chain; its full sequence is MSGVTTVEYRGRVAVITICNERKLNALDLHGYYELSERMREVATHDEVYVTLLTAKGRFFSAGADVSTIRDPPTTGEDDSGIADGGRRQWLQSFVAFNLNITQAFYSHPKILVVGLNGPVVGLSAALVSFADFIYATPSTFLLTPFSSLGLVAEGGASRALVQRLGVSKANEALLMSRRVPADELLQTGFVNKVFTELKGAKDDDVRFKELVLAEIDDKLGDHLVGDSLIGIKELIRRPEIDVLEGQNAREVFAGLGRFMSGVPQREFLKLASGEKRHKL.

Glu154 acts as the Proton donor/acceptor in catalysis. The Peroxisome targeting signal (PTS1) motif lies at 278-280 (HKL).

The protein belongs to the enoyl-CoA hydratase/isomerase family.

Its subcellular location is the cytoplasm. It localises to the cytosol. It is found in the peroxisome. The enzyme catalyses a (3E,5Z)-dienoyl-CoA = a (2E,4E)-(5,6-saturated)-dienoyl-CoA. Its pathway is lipid metabolism; fatty acid beta-oxidation. Its function is as follows. Peroxisomal di-isomerase that is involved in fatty acid metabolism enzyme by converting 3,5-dienoyl-CoAs to the corresponding 2,4-dienoyl-CoAs. Involved in fatty acid beta-oxidation, which is important for lipid droplets degradation and infectious growth. The polypeptide is Delta(3,5)-Delta(2,4)-dienoyl-CoA isomerase (Pyricularia oryzae (strain 70-15 / ATCC MYA-4617 / FGSC 8958) (Rice blast fungus)).